The chain runs to 319 residues: Ankyrin repeat domain-containing protein 1 (319 aa).

The stretch at 61-89 (KSEKQREAELKKKKLEQRSKLENLEDLEI) forms a coiled coil. 5 ANK repeats span residues 152–181 (YKRTALHRACLEGHLAIVEKLMEAGAQIEF), 185–214 (LESTAIHWASRGGNLDVLKLLLNKGAKISA), 218–247 (LLSTALHVAVRTGHYECAEHLIACEADLNA), 251–280 (EGDTPLHDAVRLNRYKMIRLLIMYGADLNI), and 284–315 (AGKTPMDLVLHWQNGTKAIFDSLRENSYKTSR).

As to quaternary structure, interacts with YBX1. Interacts with TTN/titin. In terms of tissue distribution, mainly expressed in activated vascular endothelial cells. To a lower extent, also expressed in hepatoma cells.

It is found in the nucleus. May play an important role in endothelial cell activation. May act as a nuclear transcription factor that negatively regulates the expression of cardiac genes. Induction seems to be correlated with apoptotic cell death in hepatoma cells. This chain is Ankyrin repeat domain-containing protein 1 (ANKRD1), found in Homo sapiens (Human).